The chain runs to 823 residues: Protein FAM83G (823 aa).

At Ala2 the chain carries N-acetylalanine. The tract at residues 2 to 312 (AFSQVQCLDD…LYLMSHSVSL (311 aa)) is DUF1669. Ser4 is subject to Phosphoserine. The segment at 75-108 (DPGSEDPRGTGPSQGPEDNGVGDGEEASGADGVP) is disordered. Phosphoserine occurs at positions 124, 127, and 356. The disordered stretch occupies residues 450–823 (RDTSQASAQH…AQAPRDRKDP (374 aa)). Residues 452–465 (TSQASAQHQLWKQS) show a composition bias toward polar residues. Residues 497 to 508 (DPEPLPPVPKPR) show a composition bias toward pro residues. Residues 529 to 543 (LPKEEAPQNGTDHRL) are compositionally biased toward basic and acidic residues. A compositionally biased stretch (acidic residues) spans 578 to 587 (GVEEEDDDDY). Ser610, Ser614, Ser616, Ser650, and Ser666 each carry phosphoserine. Composition is skewed to basic and acidic residues over residues 672 to 681 (RGREEADALK) and 809 to 823 (DSKR…RKDP).

It belongs to the FAM83 family. As to quaternary structure, interacts with SMAD1 (via MH2 domain); in a SMAD4-independent manner. Directly interacts (via DUF1669) with casein kinase isoforms CSNK1A1 and CSNK1A1L. In terms of processing, phosphorylated in vitro by CSNK1A1. BMP signaling induces the phosphorylation by BMPR1A at Ser-610, Ser-614 and Ser-616. Phosphorylation at Ser-610 is necessary for the activation of SMAD4-independent BMP target genes such as NEDD9 and ASNS.

The protein localises to the cytoplasm. Its subcellular location is the cytosol. It localises to the nucleus. Functionally, substrate for type I BMP receptor kinase involved in regulation of some target genes of the BMP signaling pathway. Also regulates the expression of several non-BMP target genes, suggesting a role in other signaling pathways. The chain is Protein FAM83G (FAM83G) from Homo sapiens (Human).